Consider the following 1481-residue polypeptide: Cystic fibrosis transmembrane conductance regulator (1481 aa).

Topologically, residues 1-77 are cytoplasmic; sequence MQRSPLEKAS…KLINALRRCF (77 aa). The chain crosses the membrane as a helical span at residues 78–98; it reads FWRFMFYGILLYLGEVTKAVQ. Residues 81–365 enclose the ABC transmembrane type-1 1 domain; that stretch reads FMFYGILLYL…WAVQTWYDSL (285 aa). At 99-122 the chain is on the extracellular side; the sequence is PLLLGRIIASYDPDNKEERSIAIY. A helical membrane pass occupies residues 123–146; sequence LGIGLCLLFIVRTLLLHPAIFGLH. The Cytoplasmic segment spans residues 147 to 195; sequence HIGMQMRIAMFSLIYKKTLKLSSRVLDKISIGQLVSLLSNNLNKFDEGL. A helical transmembrane segment spans residues 196–216; it reads ALAHFVWIVPLQVALLMGLIW. Residues 217–222 are Extracellular-facing; that stretch reads ELLQAS. Residues 223 to 243 form a helical membrane-spanning segment; sequence AFCGLGFLIVLALFQAGLGRM. The Cytoplasmic segment spans residues 244 to 298; the sequence is MMKYRDQRAGKINERLVITSEMIENIQSVKAYCWEEAMEKMIENLRQTELKLTRK. The helical transmembrane segment at 299–319 threads the bilayer; the sequence is AAYVRYFNSSAFFFSGFFVVF. At 320–339 the chain is on the extracellular side; the sequence is LSVLPYALIKGIVLRKIFTT. A helical membrane pass occupies residues 340–358; the sequence is ISFCIVLRMAVTRQFPWAV. Residues 359 to 858 lie on the Cytoplasmic side of the membrane; that stretch reads QTWYDSLGAI…YLRYITVHKS (500 aa). Residues Trp-401, Ser-434, 458–465, and Gln-493 contribute to the ATP site; that span reads GSTGAGKT. In terms of domain architecture, ABC transporter 1 spans 423-646; it reads NDDDSLFFSN…RPDFSSKLMG (224 aa). A lipid anchor (S-palmitoyl cysteine) is attached at Cys-524. Ser-549 and Ser-660 each carry phosphoserine. A disordered R region region spans residues 654 to 831; the sequence is SAERRNSILT…EEINEEDLKE (178 aa). A Phosphoserine; by PKA modification is found at Ser-670. Ser-686 carries the post-translational modification Phosphoserine. Lys-688 is covalently cross-linked (Glycyl lysine isopeptide (Lys-Gly) (interchain with G-Cter in ubiquitin)). A phosphoserine mark is found at Ser-700 and Ser-712. Position 717 is a phosphothreonine (Thr-717). Ser-737, Ser-753, Ser-768, Ser-790, Ser-795, and Ser-813 each carry phosphoserine. The helical transmembrane segment at 859-879 threads the bilayer; it reads LIFVLIWCLVIFLAEVAASLV. Residues 859 to 1155 enclose the ABC transmembrane type-1 2 domain; the sequence is LIFVLIWCLV…AVNSSIDVDS (297 aa). At 880–918 the chain is on the extracellular side; sequence VLWFLGNTPPQDKGNSTYSRNNSYAVIITRTSSYYVFYI. 2 N-linked (GlcNAc...) asparagine glycosylation sites follow: Asn-894 and Asn-900. Residues 919–939 traverse the membrane as a discontinuously helical segment; that stretch reads YVGVADTLLAMGFFRGLPLVH. Residues 940-990 are Cytoplasmic-facing; the sequence is TLITVSKILHHKMLHSVLQAPMSTLNTLKAGGILNRFSKDIAILDDLLPLT. A helical membrane pass occupies residues 991–1011; sequence IFDFIQLLLIVIGAIAVVAVL. Residues 1012 to 1013 lie on the Extracellular side of the membrane; sequence QP. A helical transmembrane segment spans residues 1014 to 1034; sequence YIFVATVPVIVAFIMLRAYFL. The Cytoplasmic segment spans residues 1035 to 1095; sequence QTSQQLKQLE…TANWFLYLST (61 aa). The helical transmembrane segment at 1096-1116 threads the bilayer; sequence LRWFQMRIEMIFVIFFIAVTF. Topologically, residues 1117–1130 are extracellular; the sequence is ISILTTGEGEGTVG. The helical transmembrane segment at 1131–1151 threads the bilayer; sequence IILTLAMNIMSTLQWAVNSSI. At 1152–1481 the chain is on the cytoplasmic side; that stretch reads DVDSLMRSVS…TEEEVQDTRL (330 aa). The ABC transporter 2 domain maps to 1211 to 1444; that stretch reads MTVKDLTAKY…RSLFRQAISP (234 aa). ATP is bound by residues Tyr-1220 and 1245–1252; that span reads GRTGSGKS. Residues 1387 to 1481 are interaction with GORASP2; sequence RTLKQAFADC…TEEEVQDTRL (95 aa). A lipid anchor (S-palmitoyl cysteine) is attached at Cys-1396. Residues Ser-1445 and Ser-1457 each carry the phosphoserine modification. Positions 1479–1481 match the PDZ-binding motif; it reads TRL.

Belongs to the ABC transporter superfamily. ABCC family. CFTR transporter (TC 3.A.1.202) subfamily. In terms of assembly, monomer; does not require oligomerization for channel activity. May form oligomers in the membrane. Interacts with SLC26A3, SLC26A6 and NHERF1. Interacts with SHANK2. Interacts with MYO6. Interacts (via C-terminus) with GOPC (via PDZ domain); this promotes CFTR internalization and thereby decreases channel activity. Interacts with SLC4A7 through NHERF1. Found in a complex with MYO5B and RAB11A. Interacts with ANO1. Interacts with SLC26A8. Interacts with AHCYL1; the interaction increases CFTR activity. Interacts with CSE1L. The core-glycosylated form interacts with GORASP2 (via PDZ GRASP-type 1 domain) in respone to ER stress. Interacts with MARCHF2; the interaction leads to CFTR ubiqtuitination and degradation. Interacts with ADGRG2. Post-translationally, N-glycosylated. Phosphorylated; cAMP treatment promotes phosphorylation and activates the channel. Dephosphorylation decreases the ATPase activity (in vitro). Phosphorylation at PKA sites activates the channel. Phosphorylation at PKC sites enhances the response to phosphorylation by PKA. Phosphorylated by AMPK; this inhibits channel activity. In terms of processing, ubiquitinated, leading to its degradation in the lysosome. Deubiquitination by USP10 in early endosomes enhances its endocytic recycling to the cell membrane. Ubiquitinated by RNF185 during ER stress. Ubiquitinated by MARCHF2.

The protein resides in the apical cell membrane. The protein localises to the early endosome membrane. It localises to the cell membrane. Its subcellular location is the recycling endosome membrane. It is found in the endoplasmic reticulum membrane. The protein resides in the nucleus. The catalysed reaction is ATP + H2O + closed Cl(-) channel = ADP + phosphate + open Cl(-) channel.. The enzyme catalyses chloride(in) = chloride(out). It carries out the reaction hydrogencarbonate(in) = hydrogencarbonate(out). It catalyses the reaction ATP + H2O = ADP + phosphate + H(+). Epithelial ion channel that plays an important role in the regulation of epithelial ion and water transport and fluid homeostasis. Mediates the transport of chloride ions across the cell membrane. Possesses an intrinsic ATPase activity and utilizes ATP to gate its channel; the passive flow of anions through the channel is gated by cycles of ATP binding and hydrolysis by the ATP-binding domains. The ion channel is also permeable to HCO(3)(-); selectivity depends on the extracellular chloride concentration. Exerts its function also by modulating the activity of other ion channels and transporters. Contributes to the regulation of the pH and the ion content of the epithelial fluid layer. Modulates the activity of the epithelial sodium channel (ENaC) complex, in part by regulating the cell surface expression of the ENaC complex. May regulate bicarbonate secretion and salvage in epithelial cells by regulating the transporter SLC4A7. Can inhibit the chloride channel activity of ANO1. Plays a role in the chloride and bicarbonate homeostasis during sperm epididymal maturation and capacitation. The sequence is that of Cystic fibrosis transmembrane conductance regulator from Macaca fascicularis (Crab-eating macaque).